The primary structure comprises 409 residues: Putative competence-damage inducible protein (409 aa).

The protein belongs to the CinA family.

This Clostridium botulinum (strain ATCC 19397 / Type A) protein is Putative competence-damage inducible protein.